The chain runs to 623 residues: ATP-dependent lipid A-core flippase (623 aa).

Helical transmembrane passes span 66 to 86 (LVLA…LAVI), 103 to 123 (VWFL…CNFF), 190 to 210 (LVVI…TLII), 290 to 310 (LTPL…AVAL), and 317 to 337 (ALTV…FDPI). Residues 67-349 (VLAVLLMAGA…LTNLAGKMQK (283 aa)) form the ABC transmembrane type-1 domain. Positions 382-618 (VEFRAVSHRF…NGLYASLYNM (237 aa)) constitute an ABC transporter domain. 416–423 (GRSGSGKT) contacts ATP.

Belongs to the ABC transporter superfamily. Lipid exporter (TC 3.A.1.106) family. In terms of assembly, homodimer.

The protein localises to the cell inner membrane. The catalysed reaction is ATP + H2O + lipid A-core oligosaccharideSide 1 = ADP + phosphate + lipid A-core oligosaccharideSide 2.. Functionally, involved in lipopolysaccharide (LPS) biosynthesis. Translocates lipid A-core from the inner to the outer leaflet of the inner membrane. Transmembrane domains (TMD) form a pore in the inner membrane and the ATP-binding domain (NBD) is responsible for energy generation. This chain is ATP-dependent lipid A-core flippase, found in Bordetella bronchiseptica (strain ATCC BAA-588 / NCTC 13252 / RB50) (Alcaligenes bronchisepticus).